The primary structure comprises 269 residues: Cyclic AMP-dependent transcription factor ATF-1 (269 aa).

The tract at residues 1–90 is disordered; that stretch reads MEDSHKSNTT…GEGENPSISA (90 aa). Polar residues predominate over residues 9-18; it reads TTETASQPGS. One can recognise a KID domain in the interval 31–90; sequence QVSSLSESEESQDSSDSIGSSQKAHGILARRPSYRKILKDLSSEDTRGRKGEGENPSISA. Phosphoserine; by CaMK1, CDK3, RPS6KA4 and RPS6KA5 is present on Ser-63. A compositionally biased stretch (basic and acidic residues) spans 67–83; the sequence is ILKDLSSEDTRGRKGEG. Position 196 is a phosphoserine; by HIPK2 (Ser-196). Residue Lys-206 forms a Glycyl lysine isopeptide (Lys-Gly) (interchain with G-Cter in SUMO2) linkage. The bZIP domain maps to 211–269; sequence QLRREIRLMKNREAARECRRKKKEYVKCLENRVAVLENQNKTLIEELKTLKDLYSHKSV. Positions 213–237 are basic motif; that stretch reads RREIRLMKNREAARECRRKKKEYVK. The segment at 239-260 is leucine-zipper; it reads LENRVAVLENQNKTLIEELKTL.

This sequence belongs to the bZIP family. ATF subfamily. In terms of assembly, binds DNA as a dimer. Interacts with HIPK2 and CDK3. Interacts with MOTS-c, a peptide produced by the mitochondrially encoded 12S rRNA MT-RNR1; the interaction occurs in the nucleus following metabolic stress. Phosphorylated at Ser-196 by HIPK2 in response to genotoxic stress. This phosphorylation promotes transcription repression of FTH1 and other antioxidant detoxification genes. The CDK3-mediated phosphorylation at Ser-63 promotes its transactivation and transcriptional activities. Phosphorylated at Ser-63 by RPS6KA4 and RPS6KA5 in response to mitogenic or stress stimuli.

Its subcellular location is the nucleus. Functionally, binds the cAMP response element (CRE) (consensus: 5'-GTGACGT[AC][AG]-3'), a sequence present in many viral and cellular promoters. Binds to the Tax-responsive element (TRE) of HTLV-I. Mediates PKA-induced stimulation of CRE-reporter genes. Represses the expression of FTH1 and other antioxidant detoxification genes. Triggers cell proliferation and transformation. This chain is Cyclic AMP-dependent transcription factor ATF-1 (Atf1), found in Mus musculus (Mouse).